The sequence spans 264 residues: U1 snRNP-associated protein usp106 (264 aa).

Positions 83 to 126 (DYLEDLERHVDDCNKRIDIAEARREKTKEEEERIDELMRDIIHT) form a coiled coil. A compositionally biased stretch (basic and acidic residues) spans 233-258 (EDREKSRDKKDGEKQRDNLASFEDKI). The interval 233–264 (EDREKSRDKKDGEKQRDNLASFEDKISTSFVA) is disordered.

It belongs to the Luc7 family. As to quaternary structure, component of the U1 snRNP particle, a subcomplex of the spliceosome.

The protein resides in the cytoplasm. Its subcellular location is the nucleus. Functionally, component of the U1 snRNP particle, which recognizes and binds the 5'-splice site of pre-mRNA. Together with other non-snRNP factors, U1 snRNP forms the spliceosomal commitment complex, that targets pre-mRNA to the splicing pathway. This chain is U1 snRNP-associated protein usp106 (usp106), found in Schizosaccharomyces pombe (strain 972 / ATCC 24843) (Fission yeast).